The chain runs to 121 residues: U15-barytoxin-Tl1a (121 aa).

An N-terminal signal peptide occupies residues 1–17 (MKLSVIVLVASFGFAVA). Disulfide bonds link Cys56-Cys74, Cys67-Cys80, Cys71-Cys119, and Cys73-Cys90.

It belongs to the neurotoxin 03 (Tx2) family. 03 subfamily. Expressed by the venom gland.

Its subcellular location is the secreted. Functionally, ion channel inhibitor. This Trittame loki (Brush-footed trapdoor spider) protein is U15-barytoxin-Tl1a.